A 547-amino-acid chain; its full sequence is MGDTEKCNSDMIQRLHSSFGTTSSSIPKNPISQLDLNPNFIRSSAPQFSKPFSDSGKRIGVPPSHPNLIPPTSPFSQIPTTRQPGSHNFNPGGANHSRSMSQPNSFFSFDSLPPLSPSPFRDHDVSMEDRDSGVFNSNHSLPPSPFTRCNSTSSSSLRVGESLPPRKSHRRSNSDIPSGFNSMPLIPPRPLERSFSGGECADWSKSNPFVKKESSCEREGVGEREAMDDLFSAYMNLENIDVLNSSEADDSKNGNENRDDMESSRASGTKTNGSDTEGESSSVNESANNNMNSSGEKRESVKRRAAGGDIAPTTRHYRSVSVDSCFMEKLSFGDESLKPPPSPGSMSRKVSPTNSVDGNSGAAFSIEFNNGEFTAAEMKKIMANDKLAEMAMSDPKRVKRILANRQSAARSKERKMRYIVELEHKVQTLQTEATTLSAQLTLLQRDMMGLTNQNNELKFRLQAMEQQARLRDALNEALNGEVQRLKLAIGESSQNESERSKMQSLNAEMFQQLNISQLRQQPQQMQQQSHQQNHQNGTMATKSESNE.

3 disordered regions span residues 1–199, 244–312, and 333–356; these read MGDT…SGGE, NSSE…DIAP, and GDESLKPPPSPGSMSRKVSPTNSV. Positions 15-52 are enriched in polar residues; the sequence is LHSSFGTTSSSIPKNPISQLDLNPNFIRSSAPQFSKPF. Residues 63–73 show a composition bias toward pro residues; it reads PSHPNLIPPTS. Polar residues predominate over residues 74–89; sequence PFSQIPTTRQPGSHNF. Over residues 120–132 the composition is skewed to basic and acidic residues; it reads FRDHDVSMEDRDS. The span at 134–157 shows a compositional bias: polar residues; the sequence is VFNSNHSLPPSPFTRCNSTSSSSL. Positions 249-263 are enriched in basic and acidic residues; the sequence is DDSKNGNENRDDMES. The segment covering 264–275 has biased composition (polar residues); sequence SRASGTKTNGSD. Over residues 279-294 the composition is skewed to low complexity; sequence ESSSVNESANNNMNSS. The segment covering 344-356 has biased composition (polar residues); sequence GSMSRKVSPTNSV. The bZIP domain maps to 394–457; that stretch reads DPKRVKRILA…MGLTNQNNEL (64 aa). The segment at 396 to 417 is basic motif; that stretch reads KRVKRILANRQSAARSKERKMR. Residues 416 to 469 adopt a coiled-coil conformation; sequence MRYIVELEHKVQTLQTEATTLSAQLTLLQRDMMGLTNQNNELKFRLQAMEQQAR. Residues 422–457 are leucine-zipper; that stretch reads LEHKVQTLQTEATTLSAQLTLLQRDMMGLTNQNNEL. Residues 517 to 535 are compositionally biased toward low complexity; the sequence is QLRQQPQQMQQQSHQQNHQ. The disordered stretch occupies residues 517-547; sequence QLRQQPQQMQQQSHQQNHQNGTMATKSESNE. Residues 536–547 show a composition bias toward polar residues; sequence NGTMATKSESNE.

As to quaternary structure, forms homodimers. In terms of tissue distribution, expressed in roots, leaves and flowers. Expressed in the root tips, lateral root primordia, and guard cells of leaves, hypocotyls and anthers.

The protein resides in the cytoplasm. It is found in the nucleus. Transcription factor that acts as a repressor of reproductive development, meristem size and plant growth. Regulates meristem size, cell size and cell number during plant development. Binds to the promoters of the cell cycle regulators CYCB1-2 and SMR4, and genes involved in cell wall organization, such as XTH9, EXPA1 and EXPA3. Possesses transactivation activity in yeast. Possesses transactivation activity in plant protoplasts. Plays a role in abiotic stress response by binding to the 5'-CAGCTG-3' DNA sequence found in the promoters of MYB44 and TRX8. Plays a role in osmosensory response by binding to the 5'-AGCTGT/G-3' DNA sequence found in the promoters of the hypoosmolarity-responsive genes CYP707A1 and CYP707A3. Binds to the 5'-AGCTGT-3' DNA sequence found in the promoter of the ZAT1 gene in response to abiotic stresses, such as oxidative stress, high-light, osmotic shock, salt and heat stresses. The protein is bZIP transcription factor 29 of Arabidopsis thaliana (Mouse-ear cress).